Here is a 603-residue protein sequence, read N- to C-terminus: Probable potassium transport system protein Kup (603 aa).

Helical transmembrane passes span 15–35 (GLVF…IFLL), 43–63 (IIGV…VEYA), 94–114 (VAFV…DGVI), 135–155 (NIGQ…LFSV), 163–183 (ITWV…FSGI), 209–229 (GIIG…GEAL), 244–264 (AWRF…AFLI), 283–303 (ILYI…SQAM), 336–356 (IYIS…MLIF), 365–385 (AYGL…TSIF), 390–410 (NITK…FLLS), and 415–435 (IPHG…LILI).

This sequence belongs to the HAK/KUP transporter (TC 2.A.72) family.

The protein resides in the cell membrane. The catalysed reaction is K(+)(in) + H(+)(in) = K(+)(out) + H(+)(out). Its function is as follows. Transport of potassium into the cell. Likely operates as a K(+):H(+) symporter. This chain is Probable potassium transport system protein Kup, found in Methanosarcina barkeri (strain Fusaro / DSM 804).